A 224-amino-acid chain; its full sequence is Cytidylate kinase (224 aa).

ATP is bound at residue 11-19 (GPAAAGKST).

Belongs to the cytidylate kinase family. Type 1 subfamily.

The protein resides in the cytoplasm. The enzyme catalyses CMP + ATP = CDP + ADP. It catalyses the reaction dCMP + ATP = dCDP + ADP. The protein is Cytidylate kinase of Listeria innocua serovar 6a (strain ATCC BAA-680 / CLIP 11262).